Here is a 420-residue protein sequence, read N- to C-terminus: Carbohydrate sulfotransferase 12 (420 aa).

At 1 to 5 (MAKSR) the chain is on the cytoplasmic side. The chain crosses the membrane as a helical; Signal-anchor for type II membrane protein span at residues 6-26 (LFCLLVALGSVFMILFIIVYW). At 27–420 (DNVGTANLNL…YPKPDDLLSV (394 aa)) the chain is on the lumenal side. 2 N-linked (GlcNAc...) asparagine glycosylation sites follow: N76 and N139. 176–182 (PKVACTN) is a 3'-phosphoadenylyl sulfate binding site. N215 is a glycosylation site (N-linked (GlcNAc...) asparagine). Residue 251-259 (RDPFVRLIS) participates in 3'-phosphoadenylyl sulfate binding. N-linked (GlcNAc...) asparagine glycosylation is found at N286 and N376.

The protein belongs to the sulfotransferase 2 family.

The protein resides in the golgi apparatus membrane. It catalyses the reaction chondroitin beta-D-glucuronate + n 3'-phosphoadenylyl sulfate = chondroitin 4'-sulfate + n adenosine 3',5'-bisphosphate + n H(+). Catalyzes the transfer of sulfate to position 4 of the N-acetylgalactosamine (GalNAc) residue of chondroitin and desulfated dermatan sulfate. Chondroitin sulfate constitutes the predominant proteoglycan present in cartilage and is distributed on the surfaces of many cells and extracellular matrices. The chain is Carbohydrate sulfotransferase 12 (chst12) from Xenopus laevis (African clawed frog).